The chain runs to 270 residues: uncharacterized protein (270 aa).

Over residues 22-31 the composition is skewed to basic and acidic residues; sequence EAPQRTEASR. Positions 22–42 are disordered; it reads EAPQRTEASRTHPSPFLALPG.

This is an uncharacterized protein from Homo sapiens (Human).